The primary structure comprises 226 residues: Large ribosomal subunit protein uL4 (226 aa).

Residues 47-74 (GTAKAKTRSEVSGGGRKPWPQKHTGRAR) are disordered.

It belongs to the universal ribosomal protein uL4 family. As to quaternary structure, part of the 50S ribosomal subunit.

In terms of biological role, one of the primary rRNA binding proteins, this protein initially binds near the 5'-end of the 23S rRNA. It is important during the early stages of 50S assembly. It makes multiple contacts with different domains of the 23S rRNA in the assembled 50S subunit and ribosome. Its function is as follows. Forms part of the polypeptide exit tunnel. The sequence is that of Large ribosomal subunit protein uL4 from Kosmotoga olearia (strain ATCC BAA-1733 / DSM 21960 / TBF 19.5.1).